The primary structure comprises 68 residues: Protein SlyX homolog (68 aa).

Belongs to the SlyX family.

The sequence is that of Protein SlyX homolog from Brucella anthropi (strain ATCC 49188 / DSM 6882 / CCUG 24695 / JCM 21032 / LMG 3331 / NBRC 15819 / NCTC 12168 / Alc 37) (Ochrobactrum anthropi).